The sequence spans 707 residues: Polyribonucleotide nucleotidyltransferase (707 aa).

2 residues coordinate Mg(2+): D491 and D497. The 60-residue stretch at 558–617 (PRIEKIKIHPDKIGLLIGPGGKTIKKISAESGAEITIEDDGTVMIYSSSADSLEAAREMI) folds into the KH domain. An S1 motif domain is found at 622-695 (GEVTVGGIYR…EKGRYKFSRK (74 aa)).

This sequence belongs to the polyribonucleotide nucleotidyltransferase family. Mg(2+) serves as cofactor.

Its subcellular location is the cytoplasm. The enzyme catalyses RNA(n+1) + phosphate = RNA(n) + a ribonucleoside 5'-diphosphate. Involved in mRNA degradation. Catalyzes the phosphorolysis of single-stranded polyribonucleotides processively in the 3'- to 5'-direction. The protein is Polyribonucleotide nucleotidyltransferase of Methylacidiphilum infernorum (isolate V4) (Methylokorus infernorum (strain V4)).